We begin with the raw amino-acid sequence, 89 residues long: Small ribosomal subunit protein uS15 (89 aa).

It belongs to the universal ribosomal protein uS15 family. As to quaternary structure, part of the 30S ribosomal subunit. Forms a bridge to the 50S subunit in the 70S ribosome, contacting the 23S rRNA.

One of the primary rRNA binding proteins, it binds directly to 16S rRNA where it helps nucleate assembly of the platform of the 30S subunit by binding and bridging several RNA helices of the 16S rRNA. Functionally, forms an intersubunit bridge (bridge B4) with the 23S rRNA of the 50S subunit in the ribosome. This is Small ribosomal subunit protein uS15 from Gluconobacter oxydans (strain 621H) (Gluconobacter suboxydans).